Reading from the N-terminus, the 321-residue chain is tRNA U34 carboxymethyltransferase (321 aa).

Carboxy-S-adenosyl-L-methionine contacts are provided by residues Lys-90, Trp-104, Lys-109, Gly-129, 151 to 153 (DPT), 180 to 181 (IE), Met-195, Tyr-199, and Arg-314.

It belongs to the class I-like SAM-binding methyltransferase superfamily. CmoB family. Homotetramer.

It catalyses the reaction carboxy-S-adenosyl-L-methionine + 5-hydroxyuridine(34) in tRNA = 5-carboxymethoxyuridine(34) in tRNA + S-adenosyl-L-homocysteine + H(+). Functionally, catalyzes carboxymethyl transfer from carboxy-S-adenosyl-L-methionine (Cx-SAM) to 5-hydroxyuridine (ho5U) to form 5-carboxymethoxyuridine (cmo5U) at position 34 in tRNAs. The sequence is that of tRNA U34 carboxymethyltransferase from Histophilus somni (strain 2336) (Haemophilus somnus).